The following is a 382-amino-acid chain: MKALHFGAGNIGRGFIGKLLADAGIQLTFADVNQVVLDALNARHSYQVHVVGENEQVDTVSGVNAVSSIGDDVVDLIAHVDLITTAVGPVVLERIAPAIAKGLVKRKAQGVDAPLNIIACENMVRGTTQLKGHVMNALADGDKAWVEQHVGFVDSAVDRIVPPSASATNDPLEVTVETFSEWIVDKTQFKGALPNIPGMELTDNLMAFVERKLFTLNTGHAITAYLGKLAGHQTIRDAILDESIRAVVKGAMEESGAVLIKRYGFDADKHAAYIQKILGRFENPYLKDDVERVGRQPLRKLSAGDRLIKPLLGTLEYGLPHVNLVKGIAAAMHFRSDEDPQAQELAALITEKGPQAALAQISGLDANSDVVAEAVNAYNATK.

Position 3–14 (3–14 (ALHFGAGNIGRG)) interacts with NAD(+).

The protein belongs to the mannitol dehydrogenase family.

It catalyses the reaction D-mannitol 1-phosphate + NAD(+) = beta-D-fructose 6-phosphate + NADH + H(+). The protein is Mannitol-1-phosphate 5-dehydrogenase of Salmonella newport (strain SL254).